Consider the following 132-residue polypeptide: Small ribosomal subunit protein uS8 (132 aa).

This sequence belongs to the universal ribosomal protein uS8 family. As to quaternary structure, part of the 30S ribosomal subunit. Contacts proteins S5 and S12.

One of the primary rRNA binding proteins, it binds directly to 16S rRNA central domain where it helps coordinate assembly of the platform of the 30S subunit. This chain is Small ribosomal subunit protein uS8, found in Anaeromyxobacter dehalogenans (strain 2CP-C).